We begin with the raw amino-acid sequence, 583 residues long: 2-succinyl-5-enolpyruvyl-6-hydroxy-3-cyclohexene-1-carboxylate synthase (583 aa).

Belongs to the TPP enzyme family. MenD subfamily. In terms of assembly, homodimer. The cofactor is Mg(2+). Requires Mn(2+) as cofactor. Thiamine diphosphate serves as cofactor.

It carries out the reaction isochorismate + 2-oxoglutarate + H(+) = 5-enolpyruvoyl-6-hydroxy-2-succinyl-cyclohex-3-ene-1-carboxylate + CO2. Its pathway is quinol/quinone metabolism; 1,4-dihydroxy-2-naphthoate biosynthesis; 1,4-dihydroxy-2-naphthoate from chorismate: step 2/7. It functions in the pathway quinol/quinone metabolism; menaquinone biosynthesis. Catalyzes the thiamine diphosphate-dependent decarboxylation of 2-oxoglutarate and the subsequent addition of the resulting succinic semialdehyde-thiamine pyrophosphate anion to isochorismate to yield 2-succinyl-5-enolpyruvyl-6-hydroxy-3-cyclohexene-1-carboxylate (SEPHCHC). This is 2-succinyl-5-enolpyruvyl-6-hydroxy-3-cyclohexene-1-carboxylate synthase from Roseiflexus sp. (strain RS-1).